We begin with the raw amino-acid sequence, 141 residues long: Lutropin subunit beta (141 aa).

Residues 1-22 (MERYQELTVLLLLLLLEGGSWG) form the signal peptide. 6 disulfide bridges follow: C30–C78, C44–C93, C47–C131, C55–C109, C59–C111, and C114–C121. N34 is a glycosylation site (N-linked (GlcNAc...) asparagine).

It belongs to the glycoprotein hormones subunit beta family. As to quaternary structure, heterodimer of a common alpha chain and a unique beta chain which confers biological specificity to thyrotropin, lutropin, follitropin and gonadotropin.

The protein localises to the secreted. In terms of biological role, promotes spermatogenesis and ovulation by stimulating the testes and ovaries to synthesize steroids. This Trichosurus vulpecula (Brush-tailed possum) protein is Lutropin subunit beta (LHB).